Here is a 32-residue protein sequence, read N- to C-terminus: Putative leucine-rich repeat protein PS14 (32 aa).

The protein is Putative leucine-rich repeat protein PS14 of Pinus strobus (Eastern white pine).